Consider the following 277-residue polypeptide: Orotidine 5'-phosphate decarboxylase (277 aa).

Substrate is bound by residues aspartate 40, 62-64, 93-102, tyrosine 229, and arginine 247; these read KTH and DRKFIDIGNT. Residue lysine 95 is the Proton donor of the active site.

Belongs to the OMP decarboxylase family.

It carries out the reaction orotidine 5'-phosphate + H(+) = UMP + CO2. The protein operates within pyrimidine metabolism; UMP biosynthesis via de novo pathway; UMP from orotate: step 2/2. The chain is Orotidine 5'-phosphate decarboxylase (pyrG) from Aspergillus oryzae (strain ATCC 42149 / RIB 40) (Yellow koji mold).